We begin with the raw amino-acid sequence, 68 residues long: Conotoxin Vx2 (68 aa).

The signal sequence occupies residues 1–20; the sequence is MMSKLGVLVTICLLLFPLTA. The propeptide occupies 21-47; that stretch reads LPLDGDQPADHPAKRTQDHNLASPISA. Disulfide bonds link cysteine 55–cysteine 68, cysteine 56–cysteine 61, and cysteine 57–cysteine 65.

It belongs to the conotoxin M superfamily. Expressed by the venom duct.

The protein resides in the secreted. In vivo, elicits a series of symptoms, such as being sedative, tail stiffening and twisted jumping, when injected intracranially into mice. This Conus vexillum (Flag cone) protein is Conotoxin Vx2.